The following is a 931-amino-acid chain: Netrin receptor UNC5C (931 aa).

The first 40 residues, 1–40 (MRKGLRATAARCGLGLGYLLQMLVLPALALLSASGTGSAA), serve as a signal peptide directing secretion. The Extracellular segment spans residues 41 to 380 (QDDDFFHELP…APDSDDVALY (340 aa)). The 98-residue stretch at 62–159 (PHFLIEPEEA…AGTTKSRKAY (98 aa)) folds into the Ig-like domain. 9 disulfide bridges follow: Cys83–Cys144, Cys95–Cys142, Cys188–Cys239, Cys272–Cys309, Cys276–Cys313, Cys287–Cys299, Cys328–Cys362, Cys332–Cys367, and Cys340–Cys352. The region spanning 161-256 (RIAYLRKTFE…KRKSTTATVI (96 aa)) is the Ig-like C2-type domain. Asn236 carries an N-linked (GlcNAc...) asparagine glycan. 2 consecutive TSP type-1 domains span residues 260-314 (NGGW…TLCP) and 316-368 (DGRW…GLCM). Asn361 is a glycosylation site (N-linked (GlcNAc...) asparagine). Residues 381–401 (VGIVIAVTVCLAITVVVALFV) traverse the membrane as a helical segment. Over 402 to 931 (YRKNHRDFES…VVSLAAEGQY (530 aa)) the chain is Cytoplasmic. The required for netrin-mediated axon repulsion of neuronal growth cones stretch occupies residues 402–931 (YRKNHRDFES…VVSLAAEGQY (530 aa)). Position 502 is a phosphoserine (Ser502). Residues 530 to 673 (CTAFGTFNSL…LSTYALVGQS (144 aa)) form the ZU5 domain. Tyr568 carries the phosphotyrosine modification. The interval 694 to 712 (SLEYSIRVYCLDDTQDALK) is interaction with DCC. In terms of domain architecture, Death spans 850-929 (QKLCSSLDAP…ETVVSLAAEG (80 aa)).

It belongs to the unc-5 family. Interacts with DCC (via cytoplasmic domain). Interacts (tyrosine phosphorylated form) with PTPN11. Interacts (via extracellular domain) with FLRT3 (via extracellular domain). Interacts (via Ig-like C2-type domain) with DSCAM (via extracellular domain). Interacts (via death domain) with DAPK1. Interacts (via cytoplasmic domain) with TUBB3; this interaction is decreased by NTN1/Netrin-1. In terms of processing, proteolytically cleaved by caspases during apoptosis. The cleavage does not take place when the receptor is associated with netrin ligand. Its cleavage by caspases is required to induce apoptosis. Post-translationally, phosphorylated on different cytoplasmic tyrosine residues. Phosphorylation of Tyr-568 leads to an interaction with PTPN11 phosphatase, suggesting that its activity is regulated by phosphorylation/dephosphorylation. Tyrosine phosphorylation is netrin-dependent. In terms of tissue distribution, detected in brain (at protein level). Mainly expressed in brain. Also expressed in kidney. Not expressed in developing or adult lung.

The protein resides in the cell membrane. It localises to the cell surface. The protein localises to the synapse. Its subcellular location is the synaptosome. It is found in the cell projection. The protein resides in the axon. It localises to the dendrite. The protein localises to the growth cone. Its subcellular location is the lamellipodium. It is found in the filopodium. In terms of biological role, receptor for netrin required for axon guidance. Mediates axon repulsion of neuronal growth cones in the developing nervous system upon ligand binding. NTN1/Netrin-1 binding might cause dissociation of UNC5C from polymerized TUBB3 in microtubules and thereby lead to increased microtubule dynamics and axon repulsion. Axon repulsion in growth cones may also be caused by its association with DCC that may trigger signaling for repulsion. Might also collaborate with DSCAM in NTN1-mediated axon repulsion independently of DCC. Also involved in corticospinal tract axon guidance independently of DCC. Involved in dorsal root ganglion axon projection towards the spinal cord. It also acts as a dependence receptor required for apoptosis induction when not associated with netrin ligand. This chain is Netrin receptor UNC5C (Unc5c), found in Rattus norvegicus (Rat).